Consider the following 229-residue polypeptide: Ribose-5-phosphate isomerase A (229 aa).

Residues threonine 28–threonine 31, aspartate 84–aspartate 87, and lysine 97–glycine 100 contribute to the substrate site. Glutamate 106 serves as the catalytic Proton acceptor. Substrate is bound at residue lysine 124.

This sequence belongs to the ribose 5-phosphate isomerase family. Homodimer.

It catalyses the reaction aldehydo-D-ribose 5-phosphate = D-ribulose 5-phosphate. Its pathway is carbohydrate degradation; pentose phosphate pathway; D-ribose 5-phosphate from D-ribulose 5-phosphate (non-oxidative stage): step 1/1. Functionally, catalyzes the reversible conversion of ribose-5-phosphate to ribulose 5-phosphate. This chain is Ribose-5-phosphate isomerase A, found in Lacticaseibacillus paracasei (strain ATCC 334 / BCRC 17002 / CCUG 31169 / CIP 107868 / KCTC 3260 / NRRL B-441) (Lactobacillus paracasei).